We begin with the raw amino-acid sequence, 120 residues long: UPF0231 protein YacL (120 aa).

It belongs to the UPF0231 family.

This is UPF0231 protein YacL (yacL) from Shigella flexneri.